The chain runs to 157 residues: Ribonuclease 8 (157 aa).

A signal peptide spans M1 to A30. H45 (proton acceptor) is an active-site residue. 4 disulfides stabilise this stretch: C53-C96, C67-C121, C85-C136, and C92-C99. Residues K68–T72 and K93 contribute to the substrate site. The active-site Proton donor is H152.

This sequence belongs to the pancreatic ribonuclease family.

Its subcellular location is the secreted. In terms of biological role, has a low ribonuclease activity. The protein is Ribonuclease 8 (RNASE8) of Pan troglodytes (Chimpanzee).